The primary structure comprises 94 residues: ATP-dependent Clp protease adapter protein ClpS (94 aa).

It belongs to the ClpS family. Binds to the N-terminal domain of the chaperone ClpA.

Its function is as follows. Involved in the modulation of the specificity of the ClpAP-mediated ATP-dependent protein degradation. The sequence is that of ATP-dependent Clp protease adapter protein ClpS from Thermosynechococcus vestitus (strain NIES-2133 / IAM M-273 / BP-1).